Consider the following 540-residue polypeptide: MQWLRTVAALREQVASWRGSTIGLVPTMGSLHEGHLSLIRRCRQECDHTVVSIFVNPLQFGPNEDWDRYPRDEEGDRALCEAAGVDVVFAPDPQEMGADPATAGDRTWVMPPESLLQTLCAPHRPGHFRGVATIVLQLLNLVQPQRAYFGQKDAQQLAIIQRLVQDLQIPTTIVPCPTVREADGLAYSSRNRYLSAVERQVAASLYRALRRGYDHWQAGDPSAEGILAAARAELERTPELRVQYLELVDPQTLQPLSEVKDKGLLAIAAYVGQTRLIDNLLLSPEGVDPLPQEQQSAVPPSPKRGRRPLIAIDGPAGAGKSSVARAVAAQLQLLYLDTGAMYRAITWLALQRGIPLDDAEQLTQLAAQTQLTLQSGPSADEPTRIWADGEEVTQAIRSPEVTRWVSQVAAVPGVRQELVKRQRLIGRDGGAVLEGRDIGTHVFPDAELKVFLTASVGERAQRRQHQLQAQGQVVSLEELKAQIEQRDRRDSERLISPLRPAPDAILIDTDHLSQAEVEDKIVRLYRQLLERSGAAHFDII.

A pantoate--beta-alanine ligase region spans residues 1-280 (MQWLRTVAAL…VGQTRLIDNL (280 aa)). Residue 28 to 35 (MGSLHEGH) coordinates ATP. Residue His35 is the Proton donor of the active site. Gln59 contributes to the (R)-pantoate binding site. Gln59 contacts beta-alanine. Position 150–153 (150–153 (GQKD)) interacts with ATP. Gln156 is a binding site for (R)-pantoate. Residues Val179 and 187–190 (YSSR) each bind ATP. Residues 281-540 (LLSPEGVDPL…RSGAAHFDII (260 aa)) form a cytidylate kinase region. Residues 288-307 (DPLPQEQQSAVPPSPKRGRR) form a disordered region.

In the N-terminal section; belongs to the pantothenate synthetase family. It in the C-terminal section; belongs to the cytidylate kinase family. Type 1 subfamily.

Its subcellular location is the cytoplasm. The enzyme catalyses (R)-pantoate + beta-alanine + ATP = (R)-pantothenate + AMP + diphosphate + H(+). It catalyses the reaction CMP + ATP = CDP + ADP. The catalysed reaction is dCMP + ATP = dCDP + ADP. It functions in the pathway cofactor biosynthesis; (R)-pantothenate biosynthesis; (R)-pantothenate from (R)-pantoate and beta-alanine: step 1/1. Functionally, catalyzes the condensation of pantoate with beta-alanine in an ATP-dependent reaction via a pantoyl-adenylate intermediate. Its function is as follows. Catalyzes the transfer of a phosphate group from ATP to either CMP or dCMP to form CDP or dCDP and ADP, respectively. The protein is Bifunctional pantoate ligase/cytidylate kinase of Synechococcus sp. (strain JA-3-3Ab) (Cyanobacteria bacterium Yellowstone A-Prime).